The chain runs to 122 residues: Large ribosomal subunit protein uL14 (122 aa).

This sequence belongs to the universal ribosomal protein uL14 family. Part of the 50S ribosomal subunit. Forms a cluster with proteins L3 and L19. In the 70S ribosome, L14 and L19 interact and together make contacts with the 16S rRNA in bridges B5 and B8.

Functionally, binds to 23S rRNA. Forms part of two intersubunit bridges in the 70S ribosome. The protein is Large ribosomal subunit protein uL14 of Endomicrobium trichonymphae.